Consider the following 368-residue polypeptide: Histidinol dehydrogenase (368 aa).

Residues Thr197, Gln218, and His221 each coordinate substrate. Positions 218 and 221 each coordinate Zn(2+). Residues Glu276 and His277 each act as proton acceptor in the active site. Substrate-binding residues include His277, Asp306, Glu358, and His363. A Zn(2+)-binding site is contributed by Asp306. A Zn(2+)-binding site is contributed by His363.

The protein belongs to the histidinol dehydrogenase family. Zn(2+) is required as a cofactor.

The catalysed reaction is L-histidinol + 2 NAD(+) + H2O = L-histidine + 2 NADH + 3 H(+). It participates in amino-acid biosynthesis; L-histidine biosynthesis; L-histidine from 5-phospho-alpha-D-ribose 1-diphosphate: step 9/9. Functionally, catalyzes the sequential NAD-dependent oxidations of L-histidinol to L-histidinaldehyde and then to L-histidine. This is Histidinol dehydrogenase from Pyrobaculum aerophilum (strain ATCC 51768 / DSM 7523 / JCM 9630 / CIP 104966 / NBRC 100827 / IM2).